The chain runs to 632 residues: DNA polymerase eta (632 aa).

Positions 26–309 (IAHIDMNAFF…FEITSFWTLG (284 aa)) constitute a UmuC domain. Mg(2+) is bound by residues D30 and D155. The segment at 545–580 (EKTPKLECCKYQVTFTDQKALQEHADYHLALKLSEG) adopts a UBZ3-type zinc-finger fold. Positions 552, 553, 568, and 572 each coordinate Zn(2+). The disordered stretch occupies residues 598–632 (LLFSRKRPNSQHTATPQKKQVTSSKNILSFFTRKK). The segment covering 607–626 (SQHTATPQKKQVTSSKNILS) has biased composition (polar residues). Residues 625-632 (LSFFTRKK) are POL30-binding.

The protein belongs to the DNA polymerase type-Y family. In terms of assembly, interacts with POL30. This interaction is essential for the polymerase eta function.

Its subcellular location is the nucleus. The enzyme catalyses DNA(n) + a 2'-deoxyribonucleoside 5'-triphosphate = DNA(n+1) + diphosphate. Functionally, DNA polymerase specifically involved in DNA repair. Plays an important role in translesion synthesis, where the normal high fidelity DNA polymerases cannot proceed and DNA synthesis stalls. Plays an important role in the repair of UV-induced pyrimidine dimers. Depending on the context, it inserts the correct base, but causes frequent base transitions and transversions. Efficiently incorporates nucleotides opposite to other UV or oxidative DNA damages like O(6)-methylguanine, 7,8-dihydro-8-oxoguanine, 2,6-diamino-4-hydroxy-5-formamidopyrimidine of 2'-deoxyguanosine (FaPydG), or p-benzoquinone DNA adducts. The sequence is that of DNA polymerase eta (RAD30) from Saccharomyces cerevisiae (strain ATCC 204508 / S288c) (Baker's yeast).